Here is a 232-residue protein sequence, read N- to C-terminus: Small ribosomal subunit protein uS2 (232 aa).

This sequence belongs to the universal ribosomal protein uS2 family.

The polypeptide is Small ribosomal subunit protein uS2 (Alkaliphilus oremlandii (strain OhILAs) (Clostridium oremlandii (strain OhILAs))).